The following is a 359-amino-acid chain: Src kinase-associated phosphoprotein 1 (359 aa).

A PH domain is found at 107–210; sequence NVIKQGYLEK…WVDQISFLLK (104 aa). Tyr-142, Tyr-219, and Tyr-232 each carry phosphotyrosine. Residues 219–237 show a composition bias toward acidic residues; it reads YEEDEEEEEKEETYDDIDG. The disordered stretch occupies residues 219 to 239; it reads YEEDEEEEEKEETYDDIDGFD. 2 positions are modified to phosphotyrosine; by FYN: Tyr-271 and Tyr-295. The tract at residues 290–295 is interaction with FYB1; it reads RKGVDY. Positions 294 to 355 constitute an SH3 domain; sequence DYASYYQGLW…PKEYLTTAFE (62 aa).

Belongs to the SKAP family. Homodimer. Interacts with FYN. Interacts with PTPRC. Interacts with GRB2 when phosphorylated on Tyr-271. Interacts with FYB1, which is required for SKAP2 protein stability. Part of a complex consisting of SKAP1, FYB1 and CLNK. Interacts with RASGRP1. Interacts with FYB2. Post-translationally, phosphorylated on tyrosines. Phosphorylation by FYN on Tyr-271 is required for GRB2 interaction. Phosphorylation by FYN on Tyr-295 abolishes interaction with FYB1. Tyr-232 is dephosphorylated by PTPRC. As to expression, highly expressed in thymocytes and peripheral blood lymphocytes. Also expressed in spleen cells and testis. Present in T-cells (at protein level).

Its subcellular location is the cytoplasm. It is found in the nucleus. The protein resides in the cell membrane. Positively regulates T-cell receptor signaling by enhancing the MAP kinase pathway. Required for optimal conjugation between T-cells and antigen-presenting cells by promoting the clustering of integrin ITGAL on the surface of T-cells. May be involved in high affinity immunoglobulin epsilon receptor signaling in mast cells. In Homo sapiens (Human), this protein is Src kinase-associated phosphoprotein 1 (SKAP1).